We begin with the raw amino-acid sequence, 217 residues long: Zinc finger CCHC-type and RNA-binding motif-containing protein 1 (217 aa).

One can recognise an RRM domain in the interval 10–88 (STVYVSNLPF…RVIKASIAID (79 aa)). A CCHC-type zinc finger spans residues 105–122 (SKCYECGESGHLSYACPK). The tract at residues 120–217 (CPKNMLGERE…YFSDEEELSD (98 aa)) is disordered. A compositionally biased stretch (acidic residues) spans 145-163 (PEEEIEEVEESEDEGEDPA). Residues Ser155, Ser210, and Ser216 each carry the phosphoserine modification.

In terms of assembly, component of the U11/U12 snRNPs that are part of the U12-type spliceosome.

It localises to the nucleus. Its subcellular location is the nucleoplasm. The chain is Zinc finger CCHC-type and RNA-binding motif-containing protein 1 (ZCRB1) from Homo sapiens (Human).